The primary structure comprises 408 residues: 3-ketoacyl-CoA thiolase A, peroxisomal (408 aa).

The active-site Acyl-thioester intermediate is Cys-112. Catalysis depends on proton acceptor residues His-366 and Cys-394.

This sequence belongs to the thiolase-like superfamily. Thiolase family. As to quaternary structure, homodimer.

The protein resides in the peroxisome. It carries out the reaction an acyl-CoA + acetyl-CoA = a 3-oxoacyl-CoA + CoA. It functions in the pathway lipid metabolism; fatty acid metabolism. The protein is 3-ketoacyl-CoA thiolase A, peroxisomal of Candida tropicalis (Yeast).